The sequence spans 344 residues: Methionine import ATP-binding protein MetN (344 aa).

The ABC transporter domain maps to 2–241 (LELKQVGKVY…PQAEVTKAFV (240 aa)). 38-45 (GYSGAGKS) contacts ATP.

The protein belongs to the ABC transporter superfamily. Methionine importer (TC 3.A.1.24) family. The complex is composed of two ATP-binding proteins (MetN), two transmembrane proteins (MetI) and a solute-binding protein (MetQ).

The protein localises to the cell membrane. It carries out the reaction L-methionine(out) + ATP + H2O = L-methionine(in) + ADP + phosphate + H(+). The enzyme catalyses D-methionine(out) + ATP + H2O = D-methionine(in) + ADP + phosphate + H(+). Part of the ABC transporter complex MetNIQ involved in methionine import. Responsible for energy coupling to the transport system. The protein is Methionine import ATP-binding protein MetN of Latilactobacillus sakei subsp. sakei (strain 23K) (Lactobacillus sakei subsp. sakei).